Here is a 968-residue protein sequence, read N- to C-terminus: Glycine dehydrogenase (decarboxylating) (968 aa).

Lysine 717 bears the N6-(pyridoxal phosphate)lysine mark.

The protein belongs to the GcvP family. As to quaternary structure, the glycine cleavage system is composed of four proteins: P, T, L and H. Pyridoxal 5'-phosphate serves as cofactor.

The catalysed reaction is N(6)-[(R)-lipoyl]-L-lysyl-[glycine-cleavage complex H protein] + glycine + H(+) = N(6)-[(R)-S(8)-aminomethyldihydrolipoyl]-L-lysyl-[glycine-cleavage complex H protein] + CO2. Its function is as follows. The glycine cleavage system catalyzes the degradation of glycine. The P protein binds the alpha-amino group of glycine through its pyridoxal phosphate cofactor; CO(2) is released and the remaining methylamine moiety is then transferred to the lipoamide cofactor of the H protein. This chain is Glycine dehydrogenase (decarboxylating), found in Tropheryma whipplei (strain TW08/27) (Whipple's bacillus).